The sequence spans 108 residues: Bublin coiled-coil protein (108 aa).

Disordered regions lie at residues 1-23 (MSGP…DDDF) and 67-108 (RLEF…DEGS). Positions 25–73 (SEEYEAINSMLDQINSYLDDLEERNDSLNGKLHELMESNRQARLEFRAQ) form a coiled coil. The segment covering 99-108 (ENDKKIDEGS) has biased composition (basic and acidic residues).

Belongs to the UPF0184 (EST00098) family.

Its subcellular location is the cell junction. It is found in the cytoplasm. The protein resides in the cytoskeleton. Its function is as follows. Essential for intermediate filament organization in intestinal cells, interacts with intermediate filament and regulates intestinal lumen morphology. The chain is Bublin coiled-coil protein (bbln) from Takifugu rubripes (Japanese pufferfish).